Here is a 364-residue protein sequence, read N- to C-terminus: Dual-specificity RNA methyltransferase RlmN (364 aa).

The active-site Proton acceptor is Glu91. In terms of domain architecture, Radical SAM core spans 97–333 (EDDRGTLCIS…TTTRKTRGDD (237 aa)). Cys104 and Cys338 form a disulfide bridge. [4Fe-4S] cluster contacts are provided by Cys111, Cys115, and Cys118. Residues 164 to 165 (GE), Ser196, 218 to 220 (SLH), and Asn295 each bind S-adenosyl-L-methionine. The active-site S-methylcysteine intermediate is Cys338.

This sequence belongs to the radical SAM superfamily. RlmN family. [4Fe-4S] cluster serves as cofactor.

It localises to the cytoplasm. It catalyses the reaction adenosine(2503) in 23S rRNA + 2 reduced [2Fe-2S]-[ferredoxin] + 2 S-adenosyl-L-methionine = 2-methyladenosine(2503) in 23S rRNA + 5'-deoxyadenosine + L-methionine + 2 oxidized [2Fe-2S]-[ferredoxin] + S-adenosyl-L-homocysteine. The catalysed reaction is adenosine(37) in tRNA + 2 reduced [2Fe-2S]-[ferredoxin] + 2 S-adenosyl-L-methionine = 2-methyladenosine(37) in tRNA + 5'-deoxyadenosine + L-methionine + 2 oxidized [2Fe-2S]-[ferredoxin] + S-adenosyl-L-homocysteine. In terms of biological role, specifically methylates position 2 of adenine 2503 in 23S rRNA and position 2 of adenine 37 in tRNAs. m2A2503 modification seems to play a crucial role in the proofreading step occurring at the peptidyl transferase center and thus would serve to optimize ribosomal fidelity. This chain is Dual-specificity RNA methyltransferase RlmN, found in Dechloromonas aromatica (strain RCB).